Reading from the N-terminus, the 353-residue chain is Variable large protein 12 (353 aa).

Residues 1 to 18 form the signal peptide; it reads MRKRISAIIMTLFMVLAS. Residue cysteine 19 is the site of N-palmitoyl cysteine attachment. A lipid anchor (S-diacylglycerol cysteine) is attached at cysteine 19.

It belongs to the variable large protein (Vlp) family. Beta subfamily.

It localises to the cell outer membrane. Functionally, the Vlp and Vsp proteins are antigenically distinct proteins, only one vlp or vsp gene is transcriptionally active at any one time. Switching between these genes is a mechanism of host immune response evasion. The protein is Variable large protein 12 of Borrelia hermsii.